Here is a 274-residue protein sequence, read N- to C-terminus: Leucine-rich repeat-containing protein 10 (274 aa).

8 LRR repeats span residues 30-51 (LDRM…VCSF), 52-74 (TELV…LAQL), 76-97 (NLQI…VCTL), 98-120 (KQLC…LSLL), 121-143 (QNLR…VCEL), 145-166 (LLKT…LRRL), 167-189 (RELR…LLRM), and 191-213 (FLEV…HLTN). The tract at residues 236–274 (RVGRWAEETPEPDPRKARRYALAKEENQEPPPPLLPSSS) is disordered. Positions 239 to 250 (RWAEETPEPDPR) are enriched in basic and acidic residues. A compositionally biased stretch (pro residues) spans 264–274 (EPPPPLLPSSS).

Detected specifically in the heart.

Its subcellular location is the nucleus. May play important roles in cardiac development and/or cardiac function. The protein is Leucine-rich repeat-containing protein 10 (Lrrc10) of Mus musculus (Mouse).